Reading from the N-terminus, the 367-residue chain is Glutamate 5-kinase (367 aa).

Residue Lys10 participates in ATP binding. Substrate contacts are provided by Ser50, Asp137, and Asn149. ATP contacts are provided by residues 169-170 (TD) and 211-217 (TGGMSTK). In terms of domain architecture, PUA spans 275 to 353 (AGEITVDEGA…QEIDAILGYE (79 aa)).

It belongs to the glutamate 5-kinase family.

The protein localises to the cytoplasm. It catalyses the reaction L-glutamate + ATP = L-glutamyl 5-phosphate + ADP. The protein operates within amino-acid biosynthesis; L-proline biosynthesis; L-glutamate 5-semialdehyde from L-glutamate: step 1/2. Functionally, catalyzes the transfer of a phosphate group to glutamate to form L-glutamate 5-phosphate. This is Glutamate 5-kinase from Escherichia coli O81 (strain ED1a).